Here is a 679-residue protein sequence, read N- to C-terminus: Glycine--tRNA ligase beta subunit (679 aa).

This sequence belongs to the class-II aminoacyl-tRNA synthetase family. In terms of assembly, tetramer of two alpha and two beta subunits.

The protein localises to the cytoplasm. It carries out the reaction tRNA(Gly) + glycine + ATP = glycyl-tRNA(Gly) + AMP + diphosphate. In Streptococcus pyogenes serotype M18 (strain MGAS8232), this protein is Glycine--tRNA ligase beta subunit.